The chain runs to 218 residues: 2-C-methyl-D-erythritol 4-phosphate cytidylyltransferase (218 aa).

The protein belongs to the IspD/TarI cytidylyltransferase family. IspD subfamily.

The catalysed reaction is 2-C-methyl-D-erythritol 4-phosphate + CTP + H(+) = 4-CDP-2-C-methyl-D-erythritol + diphosphate. It functions in the pathway isoprenoid biosynthesis; isopentenyl diphosphate biosynthesis via DXP pathway; isopentenyl diphosphate from 1-deoxy-D-xylulose 5-phosphate: step 2/6. Its function is as follows. Catalyzes the formation of 4-diphosphocytidyl-2-C-methyl-D-erythritol from CTP and 2-C-methyl-D-erythritol 4-phosphate (MEP). The sequence is that of 2-C-methyl-D-erythritol 4-phosphate cytidylyltransferase from Chlamydia muridarum (strain MoPn / Nigg).